The following is a 191-amino-acid chain: Peptidyl-tRNA hydrolase (191 aa).

Y17 contacts tRNA. H22 serves as the catalytic Proton acceptor. 3 residues coordinate tRNA: Y68, N70, and N116.

It belongs to the PTH family. As to quaternary structure, monomer.

The protein resides in the cytoplasm. The catalysed reaction is an N-acyl-L-alpha-aminoacyl-tRNA + H2O = an N-acyl-L-amino acid + a tRNA + H(+). In terms of biological role, hydrolyzes ribosome-free peptidyl-tRNAs (with 1 or more amino acids incorporated), which drop off the ribosome during protein synthesis, or as a result of ribosome stalling. Catalyzes the release of premature peptidyl moieties from peptidyl-tRNA molecules trapped in stalled 50S ribosomal subunits, and thus maintains levels of free tRNAs and 50S ribosomes. This is Peptidyl-tRNA hydrolase from Francisella tularensis subsp. mediasiatica (strain FSC147).